The primary structure comprises 131 residues: Small ribosomal subunit protein uS11 (131 aa).

The protein belongs to the universal ribosomal protein uS11 family. Part of the 30S ribosomal subunit.

In terms of biological role, located on the platform of the 30S subunit. The chain is Small ribosomal subunit protein uS11 from Haloquadratum walsbyi (strain DSM 16790 / HBSQ001).